Consider the following 405-residue polypeptide: 11-beta-hydroxysteroid dehydrogenase type 2 (405 aa).

82 to 111 (TRAVLITGCDSGFGKETAKKLDSMGFTVLA) is a binding site for NAD(+). Residue Ser219 participates in substrate binding. Tyr232 acts as the Proton acceptor in catalysis. Residues 335-339 (RRRYY) form an essential for protein stability region. A compositionally biased stretch (low complexity) spans 377-387 (QPGQPGTTPPQ). The tract at residues 377-405 (QPGQPGTTPPQDAAQDPNLSPGPSPAVAR) is disordered. Positions 396 to 405 (SPGPSPAVAR) are enriched in pro residues.

This sequence belongs to the short-chain dehydrogenases/reductases (SDR) family. Interacts with ligand-free cytoplasmic NR3C2. Expressed in kidney, placenta, pancreas, prostate, ovary, small intestine and colon, and in lower levels in the spleen and testis. At midgestation, expressed at high levels in placenta and in fetal kidney and, at much lower levels, in fetal lung and testis.

The protein resides in the microsome. It localises to the endoplasmic reticulum. It carries out the reaction an 11beta-hydroxysteroid + NAD(+) = an 11-oxosteroid + NADH + H(+). The enzyme catalyses cortisol + NAD(+) = cortisone + NADH + H(+). It catalyses the reaction corticosterone + NAD(+) = 11-dehydrocorticosterone + NADH + H(+). The catalysed reaction is 11beta,17beta-dihydroxyandrost-4-ene-3-one + NAD(+) = 17beta-hydroxyandrost-4-ene-3,11-dione + NADH + H(+). It carries out the reaction 11beta-hydroxyandrost-4-ene-3,17-dione + NAD(+) = androst-4-ene-3,11,17-trione + NADH + H(+). The protein operates within steroid metabolism. With respect to regulation, inhibited by glycyrrhetinic acid (derived from liquorice). Catalyzes the conversion of biologically active 11beta-hydroxyglucocorticoids (11beta-hydroxysteroid) such as cortisol, to inactive 11-ketoglucocorticoids (11-oxosteroid) such as cortisone, in the presence of NAD(+). Functions as a dehydrogenase (oxidase), thereby decreasing the concentration of active glucocorticoids, thus protecting the nonselective mineralocorticoid receptor from occupation by glucocorticoids. Plays an important role in maintaining glucocorticoids balance during preimplantation and protects the fetus from excessive maternal corticosterone exposure. Catalyzes the oxidation of 11beta-hydroxytestosterone (11beta,17beta-dihydroxyandrost-4-ene-3-one) to 11-ketotestosterone (17beta-hydroxyandrost-4-ene-3,11-dione), a major bioactive androgen. Catalyzes the conversion of 11beta-hydroxyandrostenedione (11beta-hydroxyandrost-4-ene-3,17-dione) to 11-ketoandrostenedione (androst-4-ene-3,11,17-trione), which can be further metabolized to 11-ketotestosterone. Converts 7-beta-25-dihydroxycholesterol to 7-oxo-25-hydroxycholesterol in vitro. 7-beta-25-dihydroxycholesterol (not 7-oxo-25-hydroxycholesterol) acts as a ligand for the G-protein-coupled receptor (GPCR) Epstein-Barr virus-induced gene 2 (EBI2) and may thereby regulate immune cell migration. May protect ovulating oocytes and fertilizing spermatozoa from the adverse effects of cortisol. The polypeptide is 11-beta-hydroxysteroid dehydrogenase type 2 (Homo sapiens (Human)).